The chain runs to 329 residues: ATPase ASNA1 homolog 1 (329 aa).

Residue 26–33 (KGGVGKTT) participates in ATP binding. Asp55 is an active-site residue. The ATP site is built by Glu235 and Asn262. Zn(2+) contacts are provided by Cys271 and Cys274.

Belongs to the arsA ATPase family. Homodimer.

The protein localises to the cytoplasm. The protein resides in the endoplasmic reticulum. ATPase required for the post-translational delivery of tail-anchored (TA) proteins to the endoplasmic reticulum. Recognizes and selectively binds the transmembrane domain of TA proteins in the cytosol. This complex then targets to the endoplasmic reticulum by membrane-bound receptors, where the tail-anchored protein is released for insertion. This process is regulated by ATP binding and hydrolysis. ATP binding drives the homodimer towards the closed dimer state, facilitating recognition of newly synthesized TA membrane proteins. ATP hydrolysis is required for insertion. Subsequently, the homodimer reverts towards the open dimer state, lowering its affinity for the membrane-bound receptor, and returning it to the cytosol to initiate a new round of targeting. The chain is ATPase ASNA1 homolog 1 from Paramecium tetraurelia.